The following is a 252-amino-acid chain: Clc-like protein 2 (252 aa).

Transmembrane regions (helical) follow at residues 7 to 29 (YAILVLTIIAFLLTAAALCTPAW), 91 to 111 (LFHIYLISQAFAMLSLISFCV), 127 to 147 (VFLVLAAVIAFGCLIAFAVYS), and 173 to 193 (IALTGAFVYLVAIILSVVHVL).

It belongs to the Clc family.

The protein resides in the membrane. The sequence is that of Clc-like protein 2 (clc-2) from Caenorhabditis elegans.